The following is a 1571-amino-acid chain: Guanine nucleotide-releasing factor 2 (1571 aa).

Disordered regions lie at residues 28–85 (LPPH…RDTN), 202–271 (INSG…KLAR), and 287–316 (MRTT…PTTE). Residues 55-73 (QLHHHHHQQHHHNHHRLWK) show a composition bias toward basic residues. Residues 74–83 (TQRQSWSPRD) are compositionally biased toward polar residues. Gly residues predominate over residues 230-248 (TPGGSSRVGGAGAGGGGGV). A compositionally biased stretch (polar residues) spans 287-297 (MRTTNNTLGRS). Residues 298-309 (HSPHSPRTKHGT) show a composition bias toward basic residues. Phosphoserine occurs at positions 496 and 523. Disordered stretches follow at residues 513-580 (HNVN…QASP), 614-646 (RSRS…HQHL), 695-719 (GEGV…ESGF), 728-747 (STQT…SSNS), 776-868 (QRHI…SEVA), and 879-898 (LNHH…HSKH). Residue threonine 524 is modified to Phosphothreonine. Serine 526 bears the Phosphoserine mark. The segment covering 532 to 550 (SPPPKPPLPNRASNPPPLP) has biased composition (pro residues). The short motif at 546–556 (PPPLPPKRRSQ) is the SH3-binding element. The span at 556-579 (QPSASAGTVGVGCSSSTSTSNQAS) shows a compositional bias: low complexity. The residue at position 615 (serine 615) is a Phosphoserine. The segment covering 620–631 (ENSQCSFDSALN) has biased composition (polar residues). Residues 697 to 707 (GVAAAASGDGE) show a composition bias toward low complexity. Positions 708–718 (TNSNRHSNESG) are enriched in polar residues. Composition is skewed to low complexity over residues 735–747 (SVQS…SSNS) and 780–824 (SSSS…DLAP). The short motif at 820–831 (ADLAPALPPKSI) is the SH3-binding element. Over residues 851-866 (VQSSSGWASHRSSQSE) the composition is skewed to polar residues. 2 short sequence motifs (SH3-binding) span residues 924 to 935 (DQEPPPLPIKKK) and 986 to 997 (LEMPPALPPKNY). Residues 1013–1038 (PVIVTTPPPSPKPTLGENGSTGRPDS) are disordered. Residues 1170–1292 (DGPEVKGGYI…LRNKFVEKVT (123 aa)) enclose the N-terminal Ras-GEF domain. The region spanning 1339 to 1564 (KSLEIAEQMT…WQISEKIKPR (226 aa)) is the Ras-GEF domain.

Ubiquitous.

Guanine nucleotide-releasing protein that binds to SH3 domain of Crk. Transduces signals from Crk to activate RAS. Also involved in MAPK activation. The sequence is that of Guanine nucleotide-releasing factor 2 (C3G) from Drosophila melanogaster (Fruit fly).